Here is a 77-residue protein sequence, read N- to C-terminus: uncharacterized protein (77 aa).

The disordered stretch occupies residues 53–77 (KRVSSEANKEKSDITELLRKQVRPD).

This is an uncharacterized protein from Escherichia coli (strain K12).